Reading from the N-terminus, the 126-residue chain is 5-carboxymethyl-2-hydroxymuconate Delta-isomerase (126 aa).

Pro2 (proton acceptor; via imino nitrogen) is an active-site residue.

In terms of assembly, homotrimer.

It carries out the reaction (2E,4Z)-5-hydroxypenta-2,4-diene-1,2,5-tricarboxylate = (3E,5R)-5-carboxy-2-oxohept-3-enedioate. It participates in aromatic compound metabolism; 4-hydroxyphenylacetate degradation; pyruvate and succinate semialdehyde from 4-hydroxyphenylacetate: step 4/7. In terms of biological role, transforms 5-carboxymethyl-2-hydroxy-muconic acid (CHM) into 5-oxo-pent-3-ene-1,2,5-tricarboxylic acid (OPET). This chain is 5-carboxymethyl-2-hydroxymuconate Delta-isomerase (hpcD), found in Escherichia coli.